We begin with the raw amino-acid sequence, 159 residues long: Eukaryotic translation initiation factor 5A-4 (159 aa).

Basic and acidic residues predominate over residues 1–12 (MSDEEHQFESKA). A disordered region spans residues 1 to 21 (MSDEEHQFESKADAGASKTYP). Lys-52 carries the post-translational modification Hypusine.

Belongs to the eIF-5A family. Post-translationally, lys-52 undergoes hypusination, a unique post-translational modification that consists in the addition of a butylamino group from spermidine to lysine side chain, leading to the formation of the unusual amino acid hypusine. eIF-5As are the only known proteins to undergo this modification, which is essential for their function.

In terms of biological role, translation factor that promotes translation elongation and termination, particularly upon ribosome stalling at specific amino acid sequence contexts. Binds between the exit (E) and peptidyl (P) site of the ribosome and promotes rescue of stalled ribosome: specifically required for efficient translation of polyproline-containing peptides as well as other motifs that stall the ribosome. Acts as a ribosome quality control (RQC) cofactor by joining the RQC complex to facilitate peptidyl transfer during CAT tailing step. The sequence is that of Eukaryotic translation initiation factor 5A-4 (EIF5A4) from Solanum tuberosum (Potato).